The chain runs to 312 residues: MGLNKSASTFQLTGFPGMEKAHHWIFIPLLAAYISILLGNGTLLFLIRNDHNLHEPMYYFLAMLAATDLGVTLTTMPTVLGVLWLDHREIGHGACFSQAYFIHTLSVMESGVLLAMAYDCFITIRSPLRYTSILTNTQVMKIGVRVLTRAGLSIMPIVVRLHWFPYCRSHVLSHAFCLHQDVIKLACADITFNRLYPVVVLFAMVLLDFLIIFFSYILILKTVMGIGSGGERAKALNTCVSHICCILVFYVTVVCLTFIHRFGKHVPHVVHITMSYIHFLFPPFMNPFIYSIKTKQIQSGILRLFSLPHSRA.

Over 1–23 (MGLNKSASTFQLTGFPGMEKAHH) the chain is Extracellular. N-linked (GlcNAc...) asparagine glycosylation is present at asparagine 4. A helical transmembrane segment spans residues 24 to 44 (WIFIPLLAAYISILLGNGTLL). The Cytoplasmic portion of the chain corresponds to 45–52 (FLIRNDHN). The helical transmembrane segment at 53-73 (LHEPMYYFLAMLAATDLGVTL) threads the bilayer. The Extracellular segment spans residues 74–97 (TTMPTVLGVLWLDHREIGHGACFS). Cysteine 95 and cysteine 187 are joined by a disulfide. A helical membrane pass occupies residues 98-118 (QAYFIHTLSVMESGVLLAMAY). The Cytoplasmic segment spans residues 119–137 (DCFITIRSPLRYTSILTNT). Residues 138–158 (QVMKIGVRVLTRAGLSIMPIV) form a helical membrane-spanning segment. Residues 159-194 (VRLHWFPYCRSHVLSHAFCLHQDVIKLACADITFNR) lie on the Extracellular side of the membrane. The chain crosses the membrane as a helical span at residues 195 to 215 (LYPVVVLFAMVLLDFLIIFFS). Residues 216-235 (YILILKTVMGIGSGGERAKA) lie on the Cytoplasmic side of the membrane. A helical membrane pass occupies residues 236-256 (LNTCVSHICCILVFYVTVVCL). Topologically, residues 257–271 (TFIHRFGKHVPHVVH) are extracellular. A helical membrane pass occupies residues 272-292 (ITMSYIHFLFPPFMNPFIYSI). Residues 293-312 (KTKQIQSGILRLFSLPHSRA) lie on the Cytoplasmic side of the membrane.

This sequence belongs to the G-protein coupled receptor 1 family.

Its subcellular location is the cell membrane. Odorant receptor. In Homo sapiens (Human), this protein is Olfactory receptor 51B6 (OR51B6).